The chain runs to 599 residues: Elongation factor 4 (599 aa).

The tr-type G domain maps to 5–187; the sequence is SHIRNFSIIA…ELVRLVPPPT (183 aa). Residues 17–22 and 134–137 contribute to the GTP site; these read DHGKST and NKMD.

Belongs to the TRAFAC class translation factor GTPase superfamily. Classic translation factor GTPase family. LepA subfamily.

It is found in the cell inner membrane. The enzyme catalyses GTP + H2O = GDP + phosphate + H(+). Required for accurate and efficient protein synthesis under certain stress conditions. May act as a fidelity factor of the translation reaction, by catalyzing a one-codon backward translocation of tRNAs on improperly translocated ribosomes. Back-translocation proceeds from a post-translocation (POST) complex to a pre-translocation (PRE) complex, thus giving elongation factor G a second chance to translocate the tRNAs correctly. Binds to ribosomes in a GTP-dependent manner. The protein is Elongation factor 4 of Cellvibrio japonicus (strain Ueda107) (Pseudomonas fluorescens subsp. cellulosa).